Consider the following 512-residue polypeptide: Chromatin assembly factor 1 subunit B (512 aa).

4 WD repeats span residues 16–56 (DDHT…SSTK), 65–105 (RHTQ…TTLA), 126–165 (SMGSEIYDLCWSVDSNFLIAGAMDNSLRLYDAHTGQLLTQ), and 168–207 (DHSHYVQGVCWDPLNQYIVSESSDRSICLYEIQEEKKNPK). Positions 239 to 257 (DESSGISEPIETSNNNESP) are enriched in polar residues. Positions 239–261 (DESSGISEPIETSNNNESPVSKH) are disordered. 2 WD repeats span residues 373 to 413 (SFSN…PFYR) and 417 to 458 (LHYS…VKSQ). The segment at 459–512 (HKISLPEKRSASPSSIDDSQDNTAGGPATTTLIPRKVESSKVSKKRIAPTPVYP) is disordered. Residues S468, S470, and S473 each carry the phosphoserine modification. Positions 469–490 (ASPSSIDDSQDNTAGGPATTTL) are enriched in polar residues.

It belongs to the WD repeat HIR1 family. As to quaternary structure, component of chromatin assembly factor 1 (CAF-1), composed of pcf1, pcf2 and pcf3. Interacts with pcn1/PCNA during S-phase. Interacts with swi6 at the G1/S-phase transition and early S-phase, but not in the G2 phase. The CAF-1 complex interacts with histone H3-H4 dimers.

The protein localises to the cytoplasm. It is found in the nucleus. In terms of biological role, acts as a component of the histone chaperone complex chromatin assembly factor 1 (CAF-1), which assembles histone octamers onto DNA during replication and repair. CAF-1 performs the first step of the nucleosome assembly process, bringing newly synthesized histones H3 and H4 to replicating DNA; histones H2A/H2B can bind to this chromatin precursor subsequent to DNA replication to complete the histone octamer. Plays a role in the maintenance of heterochromatin. The protein is Chromatin assembly factor 1 subunit B of Schizosaccharomyces pombe (strain 972 / ATCC 24843) (Fission yeast).